Reading from the N-terminus, the 577-residue chain is Acyl-coenzyme A synthetase ACSM2A, mitochondrial (577 aa).

Residues 1–46 (MHWLRKVQGLCTLWGTQMSSRTLYINSRQLVSLQWGHQEVPAKFNF) constitute a mitochondrion transit peptide. Position 139 (Q139) interacts with CoA. ATP contacts are provided by residues 221–229 (TSGTSGLPK), 359–364 (ESYGQT), D446, and R461. Residue T364 coordinates substrate. 469 to 471 (SGY) contacts CoA. R472 is a binding site for substrate. R501 provides a ligand contact to CoA. A Phosphoserine modification is found at S513. Residues K532 and 540 to 542 (YPR) contribute to the CoA site. ATP is bound at residue K557.

This sequence belongs to the ATP-dependent AMP-binding enzyme family. Monomer. Requires Mg(2+) as cofactor. The cofactor is Mn(2+).

It is found in the mitochondrion. It carries out the reaction a medium-chain fatty acid + ATP + CoA = a medium-chain fatty acyl-CoA + AMP + diphosphate. The enzyme catalyses benzoate + ATP + CoA = benzoyl-CoA + AMP + diphosphate. It catalyses the reaction hexanoate + ATP + CoA = hexanoyl-CoA + AMP + diphosphate. The catalysed reaction is butanoate + ATP + CoA = butanoyl-CoA + AMP + diphosphate. It carries out the reaction octanoate + ATP + CoA = octanoyl-CoA + AMP + diphosphate. The enzyme catalyses decanoate + ATP + CoA = decanoyl-CoA + AMP + diphosphate. In terms of biological role, catalyzes the activation of fatty acids by CoA to produce an acyl-CoA, the first step in fatty acid metabolism. Capable of activating medium-chain fatty acids (e.g. butyric (C4) to decanoic (C10) acids), and certain carboxylate-containing xenobiotics, e.g. benzoate. The protein is Acyl-coenzyme A synthetase ACSM2A, mitochondrial (ACSM2A) of Homo sapiens (Human).